Here is a 261-residue protein sequence, read N- to C-terminus: Precorrin-6A reductase (261 aa).

This sequence belongs to the precorrin-6x reductase family.

The enzyme catalyses precorrin-6B + NADP(+) = precorrin-6A + NADPH + 2 H(+). Its pathway is cofactor biosynthesis; adenosylcobalamin biosynthesis; cob(II)yrinate a,c-diamide from precorrin-2 (aerobic route): step 6/10. Functionally, catalyzes the reduction of the macrocycle of precorrin-6X into precorrin-6Y. The protein is Precorrin-6A reductase (cobK) of Sinorhizobium sp.